Reading from the N-terminus, the 365-residue chain is 3-dehydroquinate synthase (365 aa).

NAD(+) is bound by residues 69–74 (DGEKYK), 103–107 (GVIGD), 127–128 (TT), lysine 140, and lysine 149. Residues glutamate 182, histidine 245, and histidine 262 each contribute to the Zn(2+) site.

Belongs to the sugar phosphate cyclases superfamily. Dehydroquinate synthase family. It depends on Co(2+) as a cofactor. The cofactor is Zn(2+). NAD(+) is required as a cofactor.

It is found in the cytoplasm. The catalysed reaction is 7-phospho-2-dehydro-3-deoxy-D-arabino-heptonate = 3-dehydroquinate + phosphate. It functions in the pathway metabolic intermediate biosynthesis; chorismate biosynthesis; chorismate from D-erythrose 4-phosphate and phosphoenolpyruvate: step 2/7. Catalyzes the conversion of 3-deoxy-D-arabino-heptulosonate 7-phosphate (DAHP) to dehydroquinate (DHQ). The chain is 3-dehydroquinate synthase from Pseudomonas entomophila (strain L48).